The chain runs to 227 residues: AN1-type zinc finger protein 3 (227 aa).

Residues 12–44 (PSLPPRCPCGFWGSSKTMNLCSKCFADFQKKQP) form an A20-type zinc finger. 4 residues coordinate Zn(2+): Cys-18, Cys-20, Cys-32, and Cys-35. Disordered stretches follow at residues 41 to 100 (KKQP…EECG) and 113 to 148 (PTKR…ETSR). Residues 49–59 (APSTSNSQSDL) are compositionally biased toward polar residues. Low complexity predominate over residues 66-77 (SDNNNTSITTPT). Polar residues-rich tracts occupy residues 78-94 (LSPS…VTSP) and 113-127 (PTKR…SENE). The segment covering 135-148 (RLLENTERSEETSR) has biased composition (basic and acidic residues). The AN1-type zinc-finger motif lies at 151 to 200 (QKSRRRCFQCQTKLELVQQELGSCRCGYVFCMLHRLPEQHDCTFDHMGRG). 8 residues coordinate Zn(2+): Cys-157, Cys-160, Cys-174, Cys-176, Cys-181, His-184, His-190, and Cys-192.

In Homo sapiens (Human), this protein is AN1-type zinc finger protein 3 (ZFAND3).